A 202-amino-acid chain; its full sequence is UPF0301 protein ML0028 (202 aa).

Belongs to the UPF0301 (AlgH) family.

In Mycobacterium leprae (strain TN), this protein is UPF0301 protein ML0028.